Consider the following 285-residue polypeptide: G patch domain-containing protein 11 (285 aa).

Residues 51–87 (MLRQIREARRKEEKQQEANLKNRQKSLKEEEQERRDI) are a coiled coil. Positions 59 to 84 (RRKEEKQQEANLKNRQKSLKEEEQER) are disordered. Residues 95–141 (CENKGFALLQKMGYKSGQALGKSGGGIVEPIPLNIKTGKSGIGHEAS) enclose the G-patch domain. Ser-141 is subject to Phosphoserine. An N6-acetyllysine modification is found at Lys-149. The segment covering 218 to 235 (EETEEDEEEKEQDEDEYK) has biased composition (acidic residues). Residues 218 to 237 (EETEEDEEEKEQDEDEYKSE) are disordered.

It belongs to the GPATCH11 family.

It is found in the chromosome. Its subcellular location is the centromere. It localises to the kinetochore. In Homo sapiens (Human), this protein is G patch domain-containing protein 11 (GPATCH11).